The primary structure comprises 275 residues: Large ribosomal subunit protein uL2 (275 aa).

The segment at 223–275 (VAMNPVDHPHGGGEGRTGEGRVPVSPWGTPAKGYRTRNNKRTDNMIVRRRHSK) is disordered. Residues 229 to 241 (DHPHGGGEGRTGE) are compositionally biased toward basic and acidic residues.

The protein belongs to the universal ribosomal protein uL2 family. Part of the 50S ribosomal subunit. Forms a bridge to the 30S subunit in the 70S ribosome.

Functionally, one of the primary rRNA binding proteins. Required for association of the 30S and 50S subunits to form the 70S ribosome, for tRNA binding and peptide bond formation. It has been suggested to have peptidyltransferase activity; this is somewhat controversial. Makes several contacts with the 16S rRNA in the 70S ribosome. The chain is Large ribosomal subunit protein uL2 from Laribacter hongkongensis (strain HLHK9).